The sequence spans 241 residues: 2,3,4,5-tetrahydropyridine-2,6-dicarboxylate N-acetyltransferase (241 aa).

It belongs to the transferase hexapeptide repeat family. DapH subfamily.

It catalyses the reaction (S)-2,3,4,5-tetrahydrodipicolinate + acetyl-CoA + H2O = L-2-acetamido-6-oxoheptanedioate + CoA. It participates in amino-acid biosynthesis; L-lysine biosynthesis via DAP pathway; LL-2,6-diaminopimelate from (S)-tetrahydrodipicolinate (acetylase route): step 1/3. Catalyzes the transfer of an acetyl group from acetyl-CoA to tetrahydrodipicolinate. This is 2,3,4,5-tetrahydropyridine-2,6-dicarboxylate N-acetyltransferase from Thermoanaerobacter sp. (strain X514).